We begin with the raw amino-acid sequence, 470 residues long: Ras-like GTPase HI_1637 (470 aa).

A Walker A motif motif is present at residues 27 to 34 (GLSRSGKT). 12 residues coordinate GTP: Ser29, Gly32, Lys33, Thr34, Ala35, Trp98, Ser101, Thr102, Arg103, Lys342, Asp344, and His345. GDP contacts are provided by Gly32, Lys33, Thr34, Ala35, Trp98, Ser101, and Thr102. 5 residues coordinate GDP: Lys342, Asp344, His345, Ala383, and Val384. Residue Val384 coordinates GTP.

It to E.coli YcjX. Monomer in solution. Mg(2+) is required as a cofactor.

It carries out the reaction GTP + H2O = GDP + phosphate + H(+). Its activity is regulated as follows. Alternates between an inactive form bound to GDP and an active form bound to GTP. Likely activated by a guanine nucleotide-exchange factor (GEF). In terms of biological role, binds GTP and GDP. Has intrinsic GTPase activity. Does not hydrolyze ATP. May act as a transducer of stress responses. The chain is Ras-like GTPase HI_1637 from Haemophilus influenzae (strain ATCC 51907 / DSM 11121 / KW20 / Rd).